A 340-amino-acid chain; its full sequence is Glycerol-3-phosphate dehydrogenase [NAD(P)+] (340 aa).

NADPH is bound by residues serine 14, phenylalanine 15, arginine 35, and lysine 108. Lysine 108 and glycine 136 together coordinate sn-glycerol 3-phosphate. Position 140 (alanine 140) interacts with NADPH. Lysine 191, aspartate 244, serine 254, arginine 255, and asparagine 256 together coordinate sn-glycerol 3-phosphate. The active-site Proton acceptor is the lysine 191. Arginine 255 lines the NADPH pocket. Residues valine 279 and glutamate 281 each coordinate NADPH.

Belongs to the NAD-dependent glycerol-3-phosphate dehydrogenase family.

The protein localises to the cytoplasm. The catalysed reaction is sn-glycerol 3-phosphate + NAD(+) = dihydroxyacetone phosphate + NADH + H(+). It catalyses the reaction sn-glycerol 3-phosphate + NADP(+) = dihydroxyacetone phosphate + NADPH + H(+). It functions in the pathway membrane lipid metabolism; glycerophospholipid metabolism. Its function is as follows. Catalyzes the reduction of the glycolytic intermediate dihydroxyacetone phosphate (DHAP) to sn-glycerol 3-phosphate (G3P), the key precursor for phospholipid synthesis. The chain is Glycerol-3-phosphate dehydrogenase [NAD(P)+] from Azotobacter vinelandii (strain DJ / ATCC BAA-1303).